We begin with the raw amino-acid sequence, 208 residues long: Large ribosomal subunit protein uL4 (208 aa).

A compositionally biased stretch (basic and acidic residues) spans 47–58; that stretch reads ARAARERSDVAR. Residues 47–84 are disordered; sequence ARAARERSDVARTGKKFGRQKGGGTARHGDRRAPIFIG.

This sequence belongs to the universal ribosomal protein uL4 family. Part of the 50S ribosomal subunit.

Its function is as follows. One of the primary rRNA binding proteins, this protein initially binds near the 5'-end of the 23S rRNA. It is important during the early stages of 50S assembly. It makes multiple contacts with different domains of the 23S rRNA in the assembled 50S subunit and ribosome. In terms of biological role, forms part of the polypeptide exit tunnel. The polypeptide is Large ribosomal subunit protein uL4 (Sphingopyxis alaskensis (strain DSM 13593 / LMG 18877 / RB2256) (Sphingomonas alaskensis)).